The sequence spans 405 residues: Argininosuccinate synthase (405 aa).

Position 12-20 (12-20 (AYSGGLDTS)) interacts with ATP. Positions 92 and 97 each coordinate L-citrulline. G122 lines the ATP pocket. 3 residues coordinate L-aspartate: T124, N128, and D129. N128 lines the L-citrulline pocket. L-citrulline is bound by residues R132, S181, S190, E266, and Y278.

This sequence belongs to the argininosuccinate synthase family. Type 1 subfamily. As to quaternary structure, homotetramer.

The protein resides in the cytoplasm. It catalyses the reaction L-citrulline + L-aspartate + ATP = 2-(N(omega)-L-arginino)succinate + AMP + diphosphate + H(+). The protein operates within amino-acid biosynthesis; L-arginine biosynthesis; L-arginine from L-ornithine and carbamoyl phosphate: step 2/3. The chain is Argininosuccinate synthase from Cronobacter sakazakii (strain ATCC BAA-894) (Enterobacter sakazakii).